We begin with the raw amino-acid sequence, 239 residues long: Fatty acid metabolism regulator protein (239 aa).

Positions 6 to 74 (QSPAGFAEEY…HGKPTKVNNF (69 aa)) constitute an HTH gntR-type domain. Residues 34–53 (ERELSELIGVTRTTLREVLQ) constitute a DNA-binding region (H-T-H motif).

Homodimer.

It is found in the cytoplasm. Functionally, multifunctional regulator of fatty acid metabolism. The chain is Fatty acid metabolism regulator protein from Salmonella paratyphi C (strain RKS4594).